The following is a 489-amino-acid chain: Glycogen synthase (489 aa).

An ADP-alpha-D-glucose-binding site is contributed by Arg20.

This sequence belongs to the glycosyltransferase 1 family. Bacterial/plant glycogen synthase subfamily.

It catalyses the reaction [(1-&gt;4)-alpha-D-glucosyl](n) + ADP-alpha-D-glucose = [(1-&gt;4)-alpha-D-glucosyl](n+1) + ADP + H(+). It functions in the pathway glycan biosynthesis; glycogen biosynthesis. Functionally, synthesizes alpha-1,4-glucan chains using ADP-glucose. The protein is Glycogen synthase of Chlorobium luteolum (strain DSM 273 / BCRC 81028 / 2530) (Pelodictyon luteolum).